Here is a 357-residue protein sequence, read N- to C-terminus: Holliday junction branch migration complex subunit RuvB (357 aa).

Positions 1–15 (MAIQSDSLSSLPDSP) are enriched in low complexity. A disordered region spans residues 1 to 30 (MAIQSDSLSSLPDSPRIVAPQPVSPNEESI). Residues 13 to 195 (DSPRIVAPQP…FGIVSRLEFY (183 aa)) form a large ATPase domain (RuvB-L) region. Residues L34, R35, G76, K79, T80, T81, 142 to 144 (EDF), R185, Y195, and R232 contribute to the ATP site. Residue T80 coordinates Mg(2+). The segment at 196–266 (NTDELARIVT…AAGRALAMLD (71 aa)) is small ATPAse domain (RuvB-S). The segment at 269 to 357 (PQGLDVMDRK…SGGTGELFSK (89 aa)) is head domain (RuvB-H). Residues R305, R324, and R329 each coordinate DNA.

This sequence belongs to the RuvB family. As to quaternary structure, homohexamer. Forms an RuvA(8)-RuvB(12)-Holliday junction (HJ) complex. HJ DNA is sandwiched between 2 RuvA tetramers; dsDNA enters through RuvA and exits via RuvB. An RuvB hexamer assembles on each DNA strand where it exits the tetramer. Each RuvB hexamer is contacted by two RuvA subunits (via domain III) on 2 adjacent RuvB subunits; this complex drives branch migration. In the full resolvosome a probable DNA-RuvA(4)-RuvB(12)-RuvC(2) complex forms which resolves the HJ.

Its subcellular location is the cytoplasm. It catalyses the reaction ATP + H2O = ADP + phosphate + H(+). Its function is as follows. The RuvA-RuvB-RuvC complex processes Holliday junction (HJ) DNA during genetic recombination and DNA repair, while the RuvA-RuvB complex plays an important role in the rescue of blocked DNA replication forks via replication fork reversal (RFR). RuvA specifically binds to HJ cruciform DNA, conferring on it an open structure. The RuvB hexamer acts as an ATP-dependent pump, pulling dsDNA into and through the RuvAB complex. RuvB forms 2 homohexamers on either side of HJ DNA bound by 1 or 2 RuvA tetramers; 4 subunits per hexamer contact DNA at a time. Coordinated motions by a converter formed by DNA-disengaged RuvB subunits stimulates ATP hydrolysis and nucleotide exchange. Immobilization of the converter enables RuvB to convert the ATP-contained energy into a lever motion, pulling 2 nucleotides of DNA out of the RuvA tetramer per ATP hydrolyzed, thus driving DNA branch migration. The RuvB motors rotate together with the DNA substrate, which together with the progressing nucleotide cycle form the mechanistic basis for DNA recombination by continuous HJ branch migration. Branch migration allows RuvC to scan DNA until it finds its consensus sequence, where it cleaves and resolves cruciform DNA. This Bordetella pertussis (strain Tohama I / ATCC BAA-589 / NCTC 13251) protein is Holliday junction branch migration complex subunit RuvB.